The primary structure comprises 49 residues: Large ribosomal subunit protein bL33A (49 aa).

This sequence belongs to the bacterial ribosomal protein bL33 family.

The sequence is that of Large ribosomal subunit protein bL33A from Lactobacillus johnsonii (strain CNCM I-12250 / La1 / NCC 533).